We begin with the raw amino-acid sequence, 465 residues long: Ribulose bisphosphate carboxylase large chain (465 aa).

Lys-4 is subject to N6,N6,N6-trimethyllysine. The substrate site is built by Asn-113 and Thr-163. The active-site Proton acceptor is Lys-165. Substrate is bound at residue Lys-167. Residues Lys-191, Asp-193, and Glu-194 each coordinate Mg(2+). N6-carboxylysine is present on Lys-191. The active-site Proton acceptor is the His-284. Substrate-binding residues include Arg-285, His-317, and Ser-369.

The protein belongs to the RuBisCO large chain family. Type I subfamily. Heterohexadecamer of 8 large chains and 8 small chains; disulfide-linked. The disulfide link is formed within the large subunit homodimers. Mg(2+) is required as a cofactor. In terms of processing, the disulfide bond which can form in the large chain dimeric partners within the hexadecamer appears to be associated with oxidative stress and protein turnover.

The protein localises to the plastid. It is found in the chloroplast. It catalyses the reaction 2 (2R)-3-phosphoglycerate + 2 H(+) = D-ribulose 1,5-bisphosphate + CO2 + H2O. The enzyme catalyses D-ribulose 1,5-bisphosphate + O2 = 2-phosphoglycolate + (2R)-3-phosphoglycerate + 2 H(+). Functionally, ruBisCO catalyzes two reactions: the carboxylation of D-ribulose 1,5-bisphosphate, the primary event in carbon dioxide fixation, as well as the oxidative fragmentation of the pentose substrate in the photorespiration process. Both reactions occur simultaneously and in competition at the same active site. The chain is Ribulose bisphosphate carboxylase large chain from Hamamelis mollis (Chinese witch hazel).